The sequence spans 512 residues: MSASWLTLAVLCATLGAGPGHGEAETRECIYYNANWELEKTNQSGVERCEGEKDKRLHCYASWRNNSGSIELVKKGCWLDDFNCYDRQECVATEENPQVFFCCCEGNYCNEKFTHLPEVTGPEVIYEPPPPTPSLLNILVYSLLPIAVLSVAILLAFWMYRHRKPPYGHVDINEDPGPPPPSPLVGLKPLQLLEIKARGRFGCVWKAQLMNDYVAVKIFPIQDKQSWQSEREIFNTPGMKHENLLQFIAAEKRGTNLETELWLITAFHDKGSLTDYLKGNIISWNELCHVAETMARGLSYLHEDVPWCKGEGHKPAIAHRDFKSKNVLLKNDLTAVLADFGLAVRFEPGKPPGDTHGQVGTRRYMAPEVLEGAINFQRDAFLRIDMYAMGLVLWELVSRCRAVDGPVDEYMLPFEEEIGQHPSLEDLQEVVVHKKMRPVFKDHWLKHPGLAQLCVTIEECWDHDAEARLSAGCVEERIAQIRKSVNGTTSDCLVSIVTSVTNVDLPPKESSI.

The signal sequence occupies residues 1–24 (MSASWLTLAVLCATLGAGPGHGEA). The Extracellular segment spans residues 25–137 (ETRECIYYNA…PPPPTPSLLN (113 aa)). 5 cysteine pairs are disulfide-bonded: cysteine 29–cysteine 59, cysteine 49–cysteine 77, cysteine 84–cysteine 103, cysteine 90–cysteine 102, and cysteine 104–cysteine 109. Asparagine 42 and asparagine 65 each carry an N-linked (GlcNAc...) asparagine glycan. A helical transmembrane segment spans residues 138–158 (ILVYSLLPIAVLSVAILLAFW). The Cytoplasmic portion of the chain corresponds to 159 to 512 (MYRHRKPPYG…VDLPPKESSI (354 aa)). Positions 190–478 (LQLLEIKARG…LSAGCVEERI (289 aa)) constitute a Protein kinase domain. ATP is bound by residues 196–204 (KARGRFGCV) and lysine 217. Residue aspartate 321 is the Proton acceptor of the active site.

It belongs to the protein kinase superfamily. TKL Ser/Thr protein kinase family. TGFB receptor subfamily. It depends on Mg(2+) as a cofactor. The cofactor is Mn(2+). Not expressed in hen anterior pituitary during the ovulatory cycle but expressed in the ovarian follicle.

The protein resides in the membrane. The catalysed reaction is L-threonyl-[receptor-protein] + ATP = O-phospho-L-threonyl-[receptor-protein] + ADP + H(+). It carries out the reaction L-seryl-[receptor-protein] + ATP = O-phospho-L-seryl-[receptor-protein] + ADP + H(+). On ligand binding, forms a receptor complex consisting of two type II and two type I transmembrane serine/threonine kinases. Type II receptors phosphorylate and activate type I receptors which autophosphorylate, then bind and activate SMAD transcriptional regulators. Receptor for activin A, activin B and inhibin A. May modulate neuropeptide expression in dorsal root ganglia (DRG) neurons and ovarian follicle development. This chain is Activin receptor type-2B (ACVR2B), found in Gallus gallus (Chicken).